Consider the following 366-residue polypeptide: Spermidine/putrescine import ATP-binding protein PotA (366 aa).

Residues 14 to 247 enclose the ABC transporter domain; that stretch reads ISARALRKVY…PADRFVADFI (234 aa). 49-56 is a binding site for ATP; the sequence is GPSGCGKT.

The protein belongs to the ABC transporter superfamily. Spermidine/putrescine importer (TC 3.A.1.11.1) family. In terms of assembly, the complex is composed of two ATP-binding proteins (PotA), two transmembrane proteins (PotB and PotC) and a solute-binding protein (PotD).

It localises to the cell inner membrane. It carries out the reaction ATP + H2O + polyamine-[polyamine-binding protein]Side 1 = ADP + phosphate + polyamineSide 2 + [polyamine-binding protein]Side 1.. Part of the ABC transporter complex PotABCD involved in spermidine/putrescine import. Responsible for energy coupling to the transport system. This is Spermidine/putrescine import ATP-binding protein PotA from Ruegeria pomeroyi (strain ATCC 700808 / DSM 15171 / DSS-3) (Silicibacter pomeroyi).